We begin with the raw amino-acid sequence, 341 residues long: tRNA N6-adenosine threonylcarbamoyltransferase (341 aa).

Residues His-112 and His-116 each coordinate Fe cation. Substrate-binding positions include 138 to 142 (TVSGG), Asp-171, Gly-184, Asp-188, and Asn-279. Position 307 (Asp-307) interacts with Fe cation.

This sequence belongs to the KAE1 / TsaD family. Requires Fe(2+) as cofactor.

Its subcellular location is the cytoplasm. It carries out the reaction L-threonylcarbamoyladenylate + adenosine(37) in tRNA = N(6)-L-threonylcarbamoyladenosine(37) in tRNA + AMP + H(+). Its function is as follows. Required for the formation of a threonylcarbamoyl group on adenosine at position 37 (t(6)A37) in tRNAs that read codons beginning with adenine. Is involved in the transfer of the threonylcarbamoyl moiety of threonylcarbamoyl-AMP (TC-AMP) to the N6 group of A37, together with TsaE and TsaB. TsaD likely plays a direct catalytic role in this reaction. This chain is tRNA N6-adenosine threonylcarbamoyltransferase, found in Riemerella anatipestifer (Moraxella anatipestifer).